The following is a 503-amino-acid chain: CDK5 regulatory subunit-associated protein 3 (503 aa).

Short sequence motifs (shuffled ATG8-binding motif) lie at residues 266-269 (IDWG), 288-291 (IDWG), and 306-309 (IDWG). The segment at 268–503 (WGDFGVEAVS…RPVNLMGTSL (236 aa)) is required for interaction with UFL1 and mediates interaction with CHEK1. An RPL10a-binding domain (RBD) region spans residues 352-367 (DELMELEIFLSQRAVE). Lys447 is covalently cross-linked (Glycyl lysine isopeptide (Lys-Gly) (interchain with G-Cter in SUMO2)).

Belongs to the CDK5RAP3 family. Substrate adapter component of the UFM1 ribosome E3 ligase (UREL) complex, composed of UFL1, DDRGK1 and CDK5RAP3. Interaction with UFL1 anchors CDK5RAP3 in the cytoplasm, preventing its translocation to the nucleus which allows expression of the CCND1 cyclin and progression of cells through the G1/S transition. Interacts with ATG8 family proteins MAP1LC3A, MAP1LC3B, GABARAP, GABARAPL1 and GABARAPL2. Interacts with CDK5R1; competes with CDK5RAP1 and CDK5RAP2. Interacts with RELA. Interacts with CHEK1; may negatively regulate CHEK1 and thereby stimulate entry into mitosis. Interacts with CDKN2A/ARF and MDM2; forms a ternary complex involved in regulation of p53/TP53. Interacts with MAPK14. Interacts with CCNB1. Interacts with TUBG1; may regulate CDK5RAP3 in mitotic G2/M transition checkpoint. In terms of processing, may be phosphorylated by CDK5. Ubiquitinated. Probably triggers proteasomal degradation and is negatively regulated by UFL1. Post-translationally, may be ufmylated. In terms of processing, cleaved by caspases early during apoptosis, the resulting peptides may play a role in rupture of the nuclear envelope. In terms of tissue distribution, widely expressed with higher expression in secretory tissues.

The protein localises to the endoplasmic reticulum membrane. The protein resides in the cytoplasm. Its subcellular location is the nucleus. It is found in the cytoskeleton. It localises to the microtubule organizing center. The protein localises to the centrosome. Functionally, substrate adapter of E3 ligase complexes mediating ufmylation, the covalent attachment of the ubiquitin-like modifier UFM1 to substrate proteins, and which is involved in various processes, such as ribosome recycling and reticulophagy (also called ER-phagy). As part of the UREL complex, plays a key role in ribosome recycling by promoting mono-ufmylation of RPL26/uL24 subunit of the 60S ribosome. Ufmylation of RPL26/uL24 occurs on free 60S ribosomes following ribosome dissociation: it weakens the junction between post-termination 60S subunits and SEC61 translocons, promoting release and recycling of the large ribosomal subunit from the endoplasmic reticulum membrane. Ufmylation of RPL26/uL24 and subsequent 60S ribosome recycling either take place after normal termination of translation or after ribosome stalling during cotranslational translocation at the endoplasmic reticulum. Within the UREL complex, CDK5RAP3 acts as a substrate adapter that constrains UFL1 ligase activity to mono-ufmylate RPL26/uL24 at 'Lys-134'. The UREL complex is also involved in reticulophagy in response to endoplasmic reticulum stress by promoting ufmylation of proteins such as CYB5R3, thereby promoting lysosomal degradation of ufmylated proteins. Also acts as a regulator of transcription: negatively regulates NF-kappa-B-mediated gene transcription through the control of RELA phosphorylation. Also regulates mitotic G2/M transition checkpoint and mitotic G2 DNA damage checkpoint. Through its interaction with CDKN2A/ARF and MDM2 may induce MDM2-dependent p53/TP53 ubiquitination, stabilization and activation in the nucleus, thereby promoting G1 cell cycle arrest and inhibition of cell proliferation. May also play a role in the rupture of the nuclear envelope during apoptosis. May regulate MAPK14 activity by regulating its dephosphorylation by PPM1D/WIP1. Required for liver development. The sequence is that of CDK5 regulatory subunit-associated protein 3 from Mus musculus (Mouse).